We begin with the raw amino-acid sequence, 287 residues long: uncharacterized protein (287 aa).

A THUMP domain is found at 133 to 239; the sequence is CEVGKTKKMT…KNIIGISIVQ (107 aa). The tract at residues 257 to 287 is disordered; the sequence is ENTKSIPNDSKLDNFDRDKNQIINDKAEHAE. Basic and acidic residues predominate over residues 266-287; the sequence is SKLDNFDRDKNQIINDKAEHAE.

This is an uncharacterized protein from Schizosaccharomyces pombe (strain 972 / ATCC 24843) (Fission yeast).